Here is a 307-residue protein sequence, read N- to C-terminus: GTPase Era (307 aa).

In terms of domain architecture, Era-type G spans R7–K181. Residues G15–S22 form a G1 region. G15 to S22 contacts GTP. A G2 region spans residues Q41 to N45. The G3 stretch occupies residues D62 to G65. GTP-binding positions include D62–L66 and N130–D133. Residues N130 to D133 form a G4 region. The interval I160 to A162 is G5. The KH type-2 domain maps to L212–E290.

This sequence belongs to the TRAFAC class TrmE-Era-EngA-EngB-Septin-like GTPase superfamily. Era GTPase family. Monomer.

It localises to the cytoplasm. The protein localises to the cell inner membrane. In terms of biological role, an essential GTPase that binds both GDP and GTP, with rapid nucleotide exchange. Plays a role in 16S rRNA processing and 30S ribosomal subunit biogenesis and possibly also in cell cycle regulation and energy metabolism. This Desulfovibrio desulfuricans (strain ATCC 27774 / DSM 6949 / MB) protein is GTPase Era.